A 161-amino-acid chain; its full sequence is Large-conductance mechanosensitive channel (161 aa).

2 helical membrane passes run 14 to 34 (VVDM…VNTL) and 85 to 105 (GLFL…FILV).

It belongs to the MscL family. Homopentamer.

It localises to the cell inner membrane. In terms of biological role, channel that opens in response to stretch forces in the membrane lipid bilayer. May participate in the regulation of osmotic pressure changes within the cell. In Chlorobium luteolum (strain DSM 273 / BCRC 81028 / 2530) (Pelodictyon luteolum), this protein is Large-conductance mechanosensitive channel.